The chain runs to 931 residues: Protein translocase subunit SecA (931 aa).

ATP is bound by residues glutamine 87, 105–109 (GEGKT), and aspartate 523. Zn(2+)-binding residues include cysteine 915, cysteine 917, cysteine 926, and histidine 927.

It belongs to the SecA family. As to quaternary structure, monomer and homodimer. Part of the essential Sec protein translocation apparatus which comprises SecA, SecYEG and auxiliary proteins SecDF-YajC and YidC. Zn(2+) serves as cofactor.

The protein resides in the cell inner membrane. It localises to the cytoplasm. It carries out the reaction ATP + H2O + cellular proteinSide 1 = ADP + phosphate + cellular proteinSide 2.. Functionally, part of the Sec protein translocase complex. Interacts with the SecYEG preprotein conducting channel. Has a central role in coupling the hydrolysis of ATP to the transfer of proteins into and across the cell membrane, serving both as a receptor for the preprotein-SecB complex and as an ATP-driven molecular motor driving the stepwise translocation of polypeptide chains across the membrane. This chain is Protein translocase subunit SecA, found in Xanthobacter autotrophicus (strain ATCC BAA-1158 / Py2).